The chain runs to 481 residues: RAC-alpha serine/threonine-protein kinase (481 aa).

In terms of domain architecture, PH spans 5–108; it reads AIVKEGWLHK…WIQVIQHVAD (104 aa). The interval 120–141 is disordered; the sequence is VRSGDSPSDNSGAEEMEVSHSK. Residues Ser127 and Ser130 are each glycosylated (O-linked (GlcNAc) serine). In terms of domain architecture, Protein kinase spans 151–409; it reads FEYLKLLGKG…AKEIMQHKFF (259 aa). Residues 157–165 and Lys180 contribute to the ATP site; that span reads LGKGTFGKV. Asp275 functions as the Proton acceptor in the catalytic mechanism. O-linked (GlcNAc) threonine glycosylation occurs at Thr306. Thr309 is subject to Phosphothreonine; by PDPK1. Thr313 carries an O-linked (GlcNAc) threonine glycan. In terms of domain architecture, AGC-kinase C-terminal spans 410 to 481; it reads AGIVWQDVYE…QFSYSASGNA (72 aa). Position 474 is a phosphoserine (Ser474). Residue Ser474 is glycosylated (O-linked (GlcNAc) serine; alternate). Tyr475 is modified (phosphotyrosine).

This sequence belongs to the protein kinase superfamily. AGC Ser/Thr protein kinase family. RAC subfamily. Post-translationally, cleavage by caspase-3/CASP3. Cleaved at the caspase-3 consensus site Asp-463 during apoptosis, resulting in down-regulation of the AKT signaling pathway and decreased cell survival. Phosphorylation on Thr-309 and Ser-474 is required for full activity. Phosphorylation of the activation loop at Thr-309 by PDPK1/PDK1 is a prerequisite for full activation. Phosphorylation by mTORC2 at Ser-474 in response to growth factors plays a key role in AKT1 activation by facilitating subsequent phosphorylation of the activation loop by PDPK1/PDK1. As to expression, expressed in the oocyte.

Its subcellular location is the cytoplasm. The protein resides in the nucleus. It catalyses the reaction L-seryl-[protein] + ATP = O-phospho-L-seryl-[protein] + ADP + H(+). The enzyme catalyses L-threonyl-[protein] + ATP = O-phospho-L-threonyl-[protein] + ADP + H(+). Activated in response to insulin. Three specific sites, one in the kinase domain (Thr-309) and the two other ones in the C-terminal regulatory region (Ser-474 and Tyr-475), need to be phosphorylated for its full activation. Functionally, AKT1 is one of several closely related serine/threonine-protein kinases known as the AKT kinase, and which regulate many processes including metabolism, proliferation, cell survival, growth and angiogenesis. This is mediated through serine and/or threonine phosphorylation of a range of downstream substrates. Over 100 substrate candidates have been reported so far, but for most of them, no isoform specificity has been reported. Signals downstream of phosphatidylinositol 3-kinase (PI(3)K) to mediate the effects of various growth factors such as platelet-derived growth factor (PDGF), epidermal growth factor (EGF), insulin and insulin-like growth factor 1 (IGF1). Plays a role as a key modulator of the AKT-mTOR signaling pathway controlling the tempo of the process of newborn neurons integration during adult neurogenesis, including correct neuron positioning, dendritic development and synapse formation. Plays a role in glucose transport by mediating insulin-induced translocation of the GLUT4 glucose transporter to the cell surface. Mediates the antiapoptotic effects of IGF1. Mediates insulin-stimulated protein synthesis, partly by playing a role in both insulin-induced phosphorylation of 4E-BP1 and in insulin-induced activation of p70 S6 kinase. Promotes glycogen synthesis by mediating the insulin-induced activation of glycogen synthase. Required for insulin-stimulated meiotic reinitiation during oocyte maturation. May be involved in the regulation of vesicular functions such as preciliary trafficking and endocytic recycling. This is RAC-alpha serine/threonine-protein kinase from Xenopus laevis (African clawed frog).